A 577-amino-acid chain; its full sequence is Pentatricopeptide repeat-containing protein At1g63400 (577 aa).

15 PPR repeats span residues 49-83 (GSGD…RPLP), 84-118 (SIFE…GISH), 119-153 (NLYT…GYEP), 154-188 (SIVT…GYRP), 189-223 (DTIT…GCQP), 224-258 (NLVT…KIEA), 259-293 (NVVI…GVRP), 294-328 (NVIT…KINP), 329-363 (NVVT…SIDP), 364-398 (DIFT…DCFP), 399-433 (NVVT…GLVG), 434-468 (NTVT…GVHP), 469-503 (NIMT…KMEP), 504-538 (TIYT…GVKP), and 539-573 (DVII…GPLP).

Belongs to the PPR family. P subfamily.

This Arabidopsis thaliana (Mouse-ear cress) protein is Pentatricopeptide repeat-containing protein At1g63400.